Consider the following 529-residue polypeptide: Zinc metalloproteinase MspA (529 aa).

The N-terminal stretch at 1–24 (MHHNYYLSPLAVALALGMVSPAKA) is a signal peptide. Positions 25–204 (ADPILLQNAS…PFVQWNDIKT (180 aa)) are excised as a propeptide. His-365 lines the Zn(2+) pocket. Residue Glu-366 is part of the active site. The Zn(2+) site is built by His-369 and Glu-389. His-451 acts as the Proton donor in catalysis.

The protein belongs to the peptidase M4 family. It depends on Zn(2+) as a cofactor.

The sequence is that of Zinc metalloproteinase MspA (mspA) from Legionella longbeachae.